We begin with the raw amino-acid sequence, 567 residues long: Urease subunit alpha (567 aa).

Residues His-134, His-136, and Lys-217 each coordinate Ni(2+). Lys-217 is subject to N6-carboxylysine. His-219 is a binding site for substrate. Positions 246 and 272 each coordinate Ni(2+). The active-site Proton donor is the His-320. Asp-360 contacts Ni(2+).

It belongs to the metallo-dependent hydrolases superfamily. Urease alpha subunit family. As to quaternary structure, heterotrimer of UreA (gamma), UreB (beta) and UreC (alpha) subunits. Three heterotrimers associate to form the active enzyme. Ni cation serves as cofactor. Carboxylation allows a single lysine to coordinate two nickel ions.

The protein localises to the cytoplasm. The catalysed reaction is urea + 2 H2O + H(+) = hydrogencarbonate + 2 NH4(+). The protein operates within nitrogen metabolism; urea degradation; CO(2) and NH(3) from urea (urease route): step 1/1. The sequence is that of Urease subunit alpha from Polynucleobacter asymbioticus (strain DSM 18221 / CIP 109841 / QLW-P1DMWA-1) (Polynucleobacter necessarius subsp. asymbioticus).